We begin with the raw amino-acid sequence, 201 residues long: Glutathione peroxidase 1 (201 aa).

Ser-32 carries the phosphoserine modification. Sec-47 is a catalytic residue. Position 47 (Sec-47) is a non-standard amino acid, selenocysteine. N6-acetyllysine; alternate occurs at positions 86, 112, and 146. N6-succinyllysine; alternate is present on residues Lys-86, Lys-112, and Lys-146. Ser-195 and Ser-199 each carry phosphoserine.

Belongs to the glutathione peroxidase family. In terms of assembly, homotetramer. Interacts with MIEN1. During periods of oxidative stress, Sec-47 may react with a superoxide radical, irreversibly lose hydroselenide and be converted to dehydroalanine.

The protein localises to the cytoplasm. It catalyses the reaction 2 glutathione + H2O2 = glutathione disulfide + 2 H2O. The enzyme catalyses (12S)-hydroperoxy-(5Z,8Z,10E,14Z)-eicosatetraenoate + 2 glutathione = (12S)-hydroxy-(5Z,8Z,10E,14Z)-eicosatetraenoate + glutathione disulfide + H2O. In terms of biological role, protects the hemoglobin in erythrocytes from oxidative breakdown. In platelets, plays a crucial role of glutathione peroxidase in the arachidonic acid metabolism. This chain is Glutathione peroxidase 1 (GPX1), found in Hylobates lar (Lar gibbon).